The following is a 632-amino-acid chain: Arginyl-tRNA--protein transferase 1 (632 aa).

Over residues 1–18 (MSLKNDASSSHDGGSNRE) the composition is skewed to polar residues. 4 disordered regions span residues 1–27 (MSLK…HGRR), 113–144 (KLDV…AKSE), 284–312 (NGNI…HQAR), and 517–580 (PAAS…NDIN). Residues 113–122 (KLDVQPREQR) are compositionally biased toward basic and acidic residues. Residues 285-296 (GNISRGANSLDG) are compositionally biased toward polar residues. The span at 298–310 (ETLHAKKDSENHQ) shows a compositional bias: basic and acidic residues. A compositionally biased stretch (acidic residues) spans 538–563 (SDEDEDEDEDDDDDDDDDEEMYETES). The segment covering 564–578 (EDSHIESDPGSKDND) has biased composition (basic and acidic residues).

The protein belongs to the R-transferase family.

It carries out the reaction an N-terminal L-alpha-aminoacyl-[protein] + L-arginyl-tRNA(Arg) = an N-terminal L-arginyl-L-aminoacyl-[protein] + tRNA(Arg) + H(+). Functionally, involved in the post-translational conjugation of arginine to the N-terminal aspartate or glutamate of a protein. This arginylation is required for degradation of the protein via the ubiquitin pathway. Component of the N-end rule pathway with ATE2 and PRT6. The N-end rule pathway regulates seed after-ripening, seedling sugar sensitivity, seedling lipid breakdown, and abscisic acid (ABA) sensitivity of germination. The end-rule pathway regulates various aspects of leaf and shoot development. Involved in the oxygen-dependent N-arginylation of RAP2-12, an activator of hypoxic gene expression. This N-terminal modification leads to ubiquitination by PRT6 and subsequent degradation of RAP2-12 under aerobic conditions. Has an important role in the progression of leaf senescence. Involved in disease resistance. The end-rule pathway plays a role in regulating the timing and amplitude of the immune response following infection with the bacterial pathogen Pseudomonas syringae pv tomato. Regulates the biosynthesis of plant-defense metabolites such as glucosinolates, and the biosynthesis and response to the phytohormone jasmonate (JA), which plays a key role in plant immunity. This Arabidopsis thaliana (Mouse-ear cress) protein is Arginyl-tRNA--protein transferase 1.